A 67-amino-acid polypeptide reads, in one-letter code: Minor structural pilin EpdD (67 aa).

Residues 1–13 constitute a propeptide that is removed on maturation; sequence MSVALKKFFSKRG. Positions 14–22 match the QXSXEXXXL motif; the sequence is QLSLEFSVL.

Post-translationally, the N-terminus is cleaved by the prepilin peptidase EppA, which recognizes the class III signal sequence. In terms of processing, N-glycosylated. Glycosylation is AglB-dependent. The N-glycosylation does not occur unless the signal peptide has been cleaved first.

The protein resides in the secreted. The protein localises to the cell surface. Its subcellular location is the fimbrium. Functionally, minor component of the type IV-like pili. Essential for pili formation. The polypeptide is Minor structural pilin EpdD (Methanococcus maripaludis (strain DSM 14266 / JCM 13030 / NBRC 101832 / S2 / LL)).